A 138-amino-acid chain; its full sequence is Venom allergen 2 (138 aa).

Residues 1–19 (MKSFVLATCLLGFAQIIYA) form the signal peptide.

It belongs to the ant venom allergen 2/4 family. Homodimer; disulfide-linked. Expressed by the venom gland.

Its subcellular location is the secreted. The sequence is that of Venom allergen 2 from Solenopsis saevissima (Fire ant).